Consider the following 266-residue polypeptide: uncharacterized protein (266 aa).

This is an uncharacterized protein from Ostreid herpesvirus 1 (isolate France) (OsHV-1).